The sequence spans 214 residues: Riboflavin kinase (214 aa).

Positions 1 to 26 (MRPDGPRDPVVGPDSGPEPPYPVRLS) are disordered. Residues Thr44 and Asn46 each coordinate Mg(2+). Residue Glu112 is the Nucleophile of the active site.

The protein belongs to the flavokinase family. Zn(2+) is required as a cofactor. It depends on Mg(2+) as a cofactor.

The enzyme catalyses riboflavin + ATP = FMN + ADP + H(+). Its pathway is cofactor biosynthesis; FMN biosynthesis; FMN from riboflavin (ATP route): step 1/1. Functionally, catalyzes the phosphorylation of riboflavin (vitamin B2) to form flavin mononucleotide (FMN) coenzyme. This is Riboflavin kinase (fmn1) from Aspergillus clavatus (strain ATCC 1007 / CBS 513.65 / DSM 816 / NCTC 3887 / NRRL 1 / QM 1276 / 107).